The sequence spans 382 residues: Galactokinase (382 aa).

Residue 34–37 (EHTD) coordinates substrate. 124 to 130 (GAGLSSS) provides a ligand contact to ATP. Mg(2+) contacts are provided by Ser-130 and Glu-162. Asp-174 serves as the catalytic Proton acceptor. Tyr-223 serves as a coordination point for substrate.

Belongs to the GHMP kinase family. GalK subfamily.

It localises to the cytoplasm. It carries out the reaction alpha-D-galactose + ATP = alpha-D-galactose 1-phosphate + ADP + H(+). It functions in the pathway carbohydrate metabolism; galactose metabolism. Catalyzes the transfer of the gamma-phosphate of ATP to D-galactose to form alpha-D-galactose-1-phosphate (Gal-1-P). This chain is Galactokinase, found in Salmonella agona (strain SL483).